Reading from the N-terminus, the 897-residue chain is Molybdenum import ATP-binding protein ModC 2 (897 aa).

Residues 6–236 form the ABC transporter domain; it reads RGRIDAAFRG…PALPLAYSRD (231 aa). 38–45 lines the ATP pocket; that stretch reads GPSGCGKT. The Mop domain occupies 295 to 365; sequence ESSILNILPA…VKGVSLVRAS (71 aa). A disordered region spans residues 823-848; that stretch reads LGDRSVLGPREPDAGAKGRKRQNDPE. A compositionally biased stretch (basic and acidic residues) spans 832–848; it reads REPDAGAKGRKRQNDPE.

Belongs to the ABC transporter superfamily. Molybdate importer (TC 3.A.1.8) family. In terms of assembly, the complex is composed of two ATP-binding proteins (ModC), two transmembrane proteins (ModB) and a solute-binding protein (ModA).

Its subcellular location is the cell inner membrane. The enzyme catalyses molybdate(out) + ATP + H2O = molybdate(in) + ADP + phosphate + H(+). Its function is as follows. Part of the ABC transporter complex ModABC involved in molybdenum import. Responsible for energy coupling to the transport system. This Bradyrhizobium diazoefficiens (strain JCM 10833 / BCRC 13528 / IAM 13628 / NBRC 14792 / USDA 110) protein is Molybdenum import ATP-binding protein ModC 2.